A 712-amino-acid polypeptide reads, in one-letter code: Eukaryotic translation initiation factor 3 subunit B (712 aa).

The residue at position 1 (Met-1) is an N-acetylmethionine. An RRM domain is found at 56–143; sequence NIIVVDHLPV…HIFAVNMFDD (88 aa).

This sequence belongs to the eIF-3 subunit B family. Component of the eukaryotic translation initiation factor 3 (eIF-3) complex, which is composed of at least 13 different subunits. Binds to the translation initiation factor TIF3H1.

The protein localises to the cytoplasm. Its function is as follows. RNA-binding component of the eukaryotic translation initiation factor 3 (eIF-3) complex, which is involved in protein synthesis of a specialized repertoire of mRNAs and, together with other initiation factors, stimulates binding of mRNA and methionyl-tRNAi to the 40S ribosome. The eIF-3 complex specifically targets and initiates translation of a subset of mRNAs involved in cell proliferation. The protein is Eukaryotic translation initiation factor 3 subunit B (TIF3B1) of Arabidopsis thaliana (Mouse-ear cress).